Consider the following 175-residue polypeptide: Anterior gradient protein 2 homolog (175 aa).

Residues 1-20 form the signal peptide; sequence MEKISVSAFLLLVALSYTLA. The segment at 21–40 is required to promote cell adhesion; sequence RDTTVKPAAKKDTKDSRPKL. Short sequence motifs (homodimer stabilization; interchain) lie at residues 45–54 and 60–67; these read SRGWGDQLIW and EALYKSKT.

Belongs to the AGR family. As to quaternary structure, monomer and homodimer. Interacts with LYPD3 and DAG1 (alphaDAG1). Interacts with MUC2; disulfide-linked.

The protein localises to the secreted. It localises to the endoplasmic reticulum. Required for MUC2 post-transcriptional synthesis and secretion. May play a role in the production of mucus by intestinal cells. Proto-oncogene that may play a role in cell migration, cell differentiation and cell growth. Promotes cell adhesion. The sequence is that of Anterior gradient protein 2 homolog (AGR2) from Pongo abelii (Sumatran orangutan).